Reading from the N-terminus, the 615-residue chain is Isocitrate dehydrogenase kinase/phosphatase (615 aa).

Residues 328-334 (APGIRGL) and K349 contribute to the ATP site. D384 is a catalytic residue. Residues 595 to 615 (AEPPATPPVKQPDAGPARRVA) form a disordered region.

The protein belongs to the AceK family.

The protein localises to the cytoplasm. It carries out the reaction L-seryl-[isocitrate dehydrogenase] + ATP = O-phospho-L-seryl-[isocitrate dehydrogenase] + ADP + H(+). Functionally, bifunctional enzyme which can phosphorylate or dephosphorylate isocitrate dehydrogenase (IDH) on a specific serine residue. This is a regulatory mechanism which enables bacteria to bypass the Krebs cycle via the glyoxylate shunt in response to the source of carbon. When bacteria are grown on glucose, IDH is fully active and unphosphorylated, but when grown on acetate or ethanol, the activity of IDH declines drastically concomitant with its phosphorylation. This is Isocitrate dehydrogenase kinase/phosphatase from Cupriavidus taiwanensis (strain DSM 17343 / BCRC 17206 / CCUG 44338 / CIP 107171 / LMG 19424 / R1) (Ralstonia taiwanensis (strain LMG 19424)).